A 77-amino-acid chain; its full sequence is Small ribosomal subunit protein uS17 (77 aa).

It belongs to the universal ribosomal protein uS17 family. As to quaternary structure, part of the 30S ribosomal subunit.

Its function is as follows. One of the primary rRNA binding proteins, it binds specifically to the 5'-end of 16S ribosomal RNA. In Rickettsia bellii (strain OSU 85-389), this protein is Small ribosomal subunit protein uS17.